Reading from the N-terminus, the 751-residue chain is ATP-dependent DNA helicase Hel308 (751 aa).

Residues Gln-20 and 39-46 (IPTASGKT) contribute to the ATP site. One can recognise a Helicase ATP-binding domain in the interval 26 to 196 (EGLLDKSKNF…WLNAKLVTDE (171 aa)). The DEAH box motif lies at 143-146 (DEIH). The 201-residue stretch at 235-435 (NLTDLIVDSV…VLRVHILGLI (201 aa)) folds into the Helicase C-terminal domain.

It belongs to the helicase family. Hel308 subfamily. In terms of assembly, monomer.

The catalysed reaction is Couples ATP hydrolysis with the unwinding of duplex DNA by translocating in the 3'-5' direction.. It catalyses the reaction ATP + H2O = ADP + phosphate + H(+). DNA-dependent ATPase and 3'-5' DNA helicase that may be involved in repair of stalled replication forks. The sequence is that of ATP-dependent DNA helicase Hel308 from Methanococcus vannielii (strain ATCC 35089 / DSM 1224 / JCM 13029 / OCM 148 / SB).